The chain runs to 215 residues: Sodium channel regulatory subunit beta-3 (215 aa).

Positions 1–22 (MPAFNRLFPLVSLVLIYWASVC) are cleaved as a signal peptide. The Extracellular segment spans residues 23–156 (FPVCVEVPSE…EEAGEDFTSV (134 aa)). Residues 24–138 (PVCVEVPSET…EAHRPFVKTT (115 aa)) form the Ig-like C2-type domain. Cystine bridges form between C26–C48 and C45–C120. N-linked (GlcNAc...) asparagine glycosylation is found at N95, N109, N113, and N121. The chain crosses the membrane as a helical span at residues 157–178 (VSEIMMYILLVFLTLWLLIEMI). Over 179 to 215 (YCYRKVSKAEEAAQENASDYLAIPSENKENSAVPVEE) the chain is Cytoplasmic.

This sequence belongs to the sodium channel auxiliary subunit SCN3B (TC 8.A.17) family. In terms of assembly, a voltage-gated sodium (Nav) channel consists of an ion-conducting pore-forming alpha subunit functional on its own that is regulated by one or more beta subunits. Forms homodimers and homotrimers. SCN3B is non-covalently associated with alpha subunits and induces the formation of alpha subunit oligomers, including trimers. Interacts with SCN5A/Nav1.5; regulatory subunit of SCN5A/Nav1.5. Interacts with SCN7A/Nav2.1; probable regulatory subunit of SCN7A/Nav2.1. Interacts with SCN10A; regulatory subunit of SCN10A/Nav1.8. Interacts with NFASC; probably involved in targeting the sodium channels to the nodes of Ranvier. Post-translationally, intramolecular disulfide bonds favor the voltage-gated sodium channel oligomeric complex assembly. N-glycosylated.

The protein localises to the cell membrane. In terms of biological role, regulatory subunit of multiple voltage-gated sodium (Nav) channels directly mediating the depolarization of excitable membranes. Navs, also called VGSCs (voltage-gated sodium channels) or VDSCs (voltage-dependent sodium channels), operate by switching between closed and open conformations depending on the voltage difference across the membrane. In the open conformation they allow Na(+) ions to selectively pass through the pore, along their electrochemical gradient. The influx of Na+ ions provokes membrane depolarization, initiating the propagation of electrical signals throughout cells and tissues. The accessory beta subunits participate in localization and functional modulation of the Nav channels. Modulates the activity of SCN2A/Nav1.2, causing a hyperpolarizing shift in the voltage-dependence of inactivation of the channel and increasing the fraction of channels operating in the fast gating mode. Modulates the activity of SCN5A/Nav1.5. Could also regulate the atypical sodium channel SCN7A/Nav2.1. Modulates the activity of SCN10A/Nav1.8, regulating its oligomerization and accelerating the recovery from inactivation. The polypeptide is Sodium channel regulatory subunit beta-3 (Macaca fascicularis (Crab-eating macaque)).